The sequence spans 423 residues: Serine--tRNA ligase (423 aa).

231-233 is an L-serine binding site; that stretch reads TAE. Position 262–264 (262–264) interacts with ATP; the sequence is RSE. Glu285 is a binding site for L-serine. 349 to 352 is a binding site for ATP; sequence EISS. Ser384 contacts L-serine.

It belongs to the class-II aminoacyl-tRNA synthetase family. Type-1 seryl-tRNA synthetase subfamily. As to quaternary structure, homodimer. The tRNA molecule binds across the dimer.

Its subcellular location is the cytoplasm. It catalyses the reaction tRNA(Ser) + L-serine + ATP = L-seryl-tRNA(Ser) + AMP + diphosphate + H(+). It carries out the reaction tRNA(Sec) + L-serine + ATP = L-seryl-tRNA(Sec) + AMP + diphosphate + H(+). It functions in the pathway aminoacyl-tRNA biosynthesis; selenocysteinyl-tRNA(Sec) biosynthesis; L-seryl-tRNA(Sec) from L-serine and tRNA(Sec): step 1/1. In terms of biological role, catalyzes the attachment of serine to tRNA(Ser). Is also able to aminoacylate tRNA(Sec) with serine, to form the misacylated tRNA L-seryl-tRNA(Sec), which will be further converted into selenocysteinyl-tRNA(Sec). This chain is Serine--tRNA ligase, found in Acinetobacter baumannii (strain AB307-0294).